The chain runs to 373 residues: Aminomethyltransferase (373 aa).

It belongs to the GcvT family. In terms of assembly, the glycine cleavage system is composed of four proteins: P, T, L and H.

It catalyses the reaction N(6)-[(R)-S(8)-aminomethyldihydrolipoyl]-L-lysyl-[protein] + (6S)-5,6,7,8-tetrahydrofolate = N(6)-[(R)-dihydrolipoyl]-L-lysyl-[protein] + (6R)-5,10-methylene-5,6,7,8-tetrahydrofolate + NH4(+). In terms of biological role, the glycine cleavage system catalyzes the degradation of glycine. This chain is Aminomethyltransferase, found in Prochlorococcus marinus (strain SARG / CCMP1375 / SS120).